A 186-amino-acid polypeptide reads, in one-letter code: Holliday junction branch migration complex subunit RuvA (186 aa).

The domain I stretch occupies residues 1–63 (MNDYINGFLY…DNHFKYYGFF (63 aa)). The tract at residues 64–137 (NQLVRDLFEI…QKELFNNKIS (74 aa)) is domain II. Serine 137 is a region of interest (flexible linker). A domain III region spans residues 137 to 186 (SEKKNKVITSLEKLGYKTKDIYKIIINVDEDLTIDELTKYVLEKLSYINN).

Belongs to the RuvA family. As to quaternary structure, homotetramer. Forms an RuvA(8)-RuvB(12)-Holliday junction (HJ) complex. HJ DNA is sandwiched between 2 RuvA tetramers; dsDNA enters through RuvA and exits via RuvB. An RuvB hexamer assembles on each DNA strand where it exits the tetramer. Each RuvB hexamer is contacted by two RuvA subunits (via domain III) on 2 adjacent RuvB subunits; this complex drives branch migration. In the full resolvosome a probable DNA-RuvA(4)-RuvB(12)-RuvC(2) complex forms which resolves the HJ.

The protein resides in the cytoplasm. The RuvA-RuvB-RuvC complex processes Holliday junction (HJ) DNA during genetic recombination and DNA repair, while the RuvA-RuvB complex plays an important role in the rescue of blocked DNA replication forks via replication fork reversal (RFR). RuvA specifically binds to HJ cruciform DNA, conferring on it an open structure. The RuvB hexamer acts as an ATP-dependent pump, pulling dsDNA into and through the RuvAB complex. HJ branch migration allows RuvC to scan DNA until it finds its consensus sequence, where it cleaves and resolves the cruciform DNA. The sequence is that of Holliday junction branch migration complex subunit RuvA from Mycoplasma capricolum subsp. capricolum (strain California kid / ATCC 27343 / NCTC 10154).